The following is a 489-amino-acid chain: Acetylcholine receptor subunit beta (489 aa).

The signal sequence occupies residues 1 to 20 (NSGALLWPLIWGLLLIGTQA). The Extracellular segment spans residues 21-235 (LDKEAQLRDK…ITFYLVIQRK (215 aa)). N-linked (GlcNAc...) asparagine glycosylation is found at N135 and N161. C148 and C162 are joined by a disulfide. The next 3 helical transmembrane spans lie at 236-260 (PLFY…VFYL), 268-286 (MTLS…LLLA), and 302-323 (YLIF…VLNL). The Cytoplasmic segment spans residues 324 to 457 (HHRSPNTHHM…WQYVAMVVDR (134 aa)). Residues 458–476 (LFLWTFIAFTSLGTLSIFL) form a helical membrane-spanning segment.

The protein belongs to the ligand-gated ion channel (TC 1.A.9) family. Acetylcholine receptor (TC 1.A.9.1) subfamily. Beta-1/CHRNB1 sub-subfamily. As to quaternary structure, pentamer of two alpha chains, and one each of the beta, delta, and gamma (in immature muscle) or epsilon (in mature muscle) chains.

It is found in the postsynaptic cell membrane. It localises to the cell membrane. The catalysed reaction is K(+)(in) = K(+)(out). The enzyme catalyses Na(+)(in) = Na(+)(out). Functionally, after binding acetylcholine, the AChR responds by an extensive change in conformation that affects all subunits and leads to opening of an ion-conducting channel across the plasma membrane. The sequence is that of Acetylcholine receptor subunit beta (chrnb1) from Xenopus laevis (African clawed frog).